The primary structure comprises 391 residues: Succinyl-diaminopimelate desuccinylase (391 aa).

H74 contacts Zn(2+). D76 is a catalytic residue. D107 contributes to the Zn(2+) binding site. E141 functions as the Proton acceptor in the catalytic mechanism. Positions 142, 170, and 360 each coordinate Zn(2+).

This sequence belongs to the peptidase M20A family. DapE subfamily. Homodimer. Zn(2+) is required as a cofactor. The cofactor is Co(2+).

The catalysed reaction is N-succinyl-(2S,6S)-2,6-diaminopimelate + H2O = (2S,6S)-2,6-diaminopimelate + succinate. It participates in amino-acid biosynthesis; L-lysine biosynthesis via DAP pathway; LL-2,6-diaminopimelate from (S)-tetrahydrodipicolinate (succinylase route): step 3/3. Its function is as follows. Catalyzes the hydrolysis of N-succinyl-L,L-diaminopimelic acid (SDAP), forming succinate and LL-2,6-diaminopimelate (DAP), an intermediate involved in the bacterial biosynthesis of lysine and meso-diaminopimelic acid, an essential component of bacterial cell walls. This is Succinyl-diaminopimelate desuccinylase from Variovorax paradoxus (strain S110).